Here is a 304-residue protein sequence, read N- to C-terminus: Glutaminase (304 aa).

Positions 63, 114, 158, 165, 189, 240, and 258 each coordinate substrate.

It belongs to the glutaminase family. In terms of assembly, homotetramer.

The enzyme catalyses L-glutamine + H2O = L-glutamate + NH4(+). This is Glutaminase from Shewanella putrefaciens (strain CN-32 / ATCC BAA-453).